The sequence spans 197 residues: Ras-like protein rasB (197 aa).

13 to 20 (GGGGVGKS) provides a ligand contact to GTP. Residues 35-43 (YDPTIEDSY) carry the Effector region motif. GTP contacts are provided by residues 60–64 (DTAGQ) and 119–122 (NKCD). Cys194 carries the post-translational modification Cysteine methyl ester. Residue Cys194 is the site of S-geranylgeranyl cysteine attachment. Residues 195-197 (LIL) constitute a propeptide, removed in mature form.

It belongs to the small GTPase superfamily. Ras family.

The protein resides in the cell membrane. It catalyses the reaction GTP + H2O = GDP + phosphate + H(+). Alternates between an inactive form bound to GDP and an active form bound to GTP. Activated by a guanine nucleotide-exchange factor (GEF) and inactivated by a GTPase-activating protein (GAP). Ras proteins bind GDP/GTP and possess intrinsic GTPase activity. This Dictyostelium discoideum (Social amoeba) protein is Ras-like protein rasB (rasB).